The sequence spans 445 residues: Argininosuccinate synthase (445 aa).

ATP contacts are provided by residues 17–25 (AFSGGLDTS) and A43. Y99 is a binding site for L-citrulline. Residues G129 and T131 each coordinate ATP. Residues T131, N135, and D136 each contribute to the L-aspartate site. N135 is an L-citrulline binding site. D136 lines the ATP pocket. Positions 139 and 192 each coordinate L-citrulline. D194 lines the ATP pocket. L-citrulline contacts are provided by T201, E203, and E280.

It belongs to the argininosuccinate synthase family. Type 2 subfamily. In terms of assembly, homotetramer.

The protein resides in the cytoplasm. The enzyme catalyses L-citrulline + L-aspartate + ATP = 2-(N(omega)-L-arginino)succinate + AMP + diphosphate + H(+). Its pathway is amino-acid biosynthesis; L-arginine biosynthesis; L-arginine from L-ornithine and carbamoyl phosphate: step 2/3. This chain is Argininosuccinate synthase, found in Burkholderia ambifaria (strain ATCC BAA-244 / DSM 16087 / CCUG 44356 / LMG 19182 / AMMD) (Burkholderia cepacia (strain AMMD)).